An 89-amino-acid chain; its full sequence is Small ribosomal subunit protein uS15 (89 aa).

The interval 1–25 is disordered; sequence MSLDTTEKQQLINTHQTHGTDTGSA. Positions 8–25 are enriched in polar residues; sequence KQQLINTHQTHGTDTGSA.

This sequence belongs to the universal ribosomal protein uS15 family. As to quaternary structure, part of the 30S ribosomal subunit. Forms a bridge to the 50S subunit in the 70S ribosome, contacting the 23S rRNA.

In terms of biological role, one of the primary rRNA binding proteins, it binds directly to 16S rRNA where it helps nucleate assembly of the platform of the 30S subunit by binding and bridging several RNA helices of the 16S rRNA. Its function is as follows. Forms an intersubunit bridge (bridge B4) with the 23S rRNA of the 50S subunit in the ribosome. The protein is Small ribosomal subunit protein uS15 of Parasynechococcus marenigrum (strain WH8102).